Here is a 192-residue protein sequence, read N- to C-terminus: uncharacterized protein (192 aa).

Transmembrane regions (helical) follow at residues 31 to 51 (IVET…YVYE) and 119 to 139 (VPGA…LWEI).

Its subcellular location is the cell membrane. This is an uncharacterized protein from Thermotoga maritima (strain ATCC 43589 / DSM 3109 / JCM 10099 / NBRC 100826 / MSB8).